The chain runs to 261 residues: Glutamate 5-kinase (261 aa).

Lysine 7 lines the ATP pocket. Serine 46, aspartate 131, and asparagine 147 together coordinate substrate. ATP is bound by residues 167–168 and 209–215; these read SD and TGGIVTK.

It belongs to the glutamate 5-kinase family.

The protein localises to the cytoplasm. It catalyses the reaction L-glutamate + ATP = L-glutamyl 5-phosphate + ADP. Its pathway is amino-acid biosynthesis; L-proline biosynthesis; L-glutamate 5-semialdehyde from L-glutamate: step 1/2. Functionally, catalyzes the transfer of a phosphate group to glutamate to form L-glutamate 5-phosphate. The sequence is that of Glutamate 5-kinase from Wolinella succinogenes (strain ATCC 29543 / DSM 1740 / CCUG 13145 / JCM 31913 / LMG 7466 / NCTC 11488 / FDC 602W) (Vibrio succinogenes).